Here is a 196-residue protein sequence, read N- to C-terminus: Translation initiation factor IF-3 (196 aa).

It belongs to the IF-3 family. In terms of assembly, monomer.

Its subcellular location is the cytoplasm. In terms of biological role, IF-3 binds to the 30S ribosomal subunit and shifts the equilibrium between 70S ribosomes and their 50S and 30S subunits in favor of the free subunits, thus enhancing the availability of 30S subunits on which protein synthesis initiation begins. The polypeptide is Translation initiation factor IF-3 (Wigglesworthia glossinidia brevipalpis).